Reading from the N-terminus, the 150-residue chain is Ventricular natriuretic peptide (150 aa).

The signal sequence occupies residues 1–21; that stretch reads MAKSGIYLGCFILILIQNMVA. Positions 52–75 are disordered; the sequence is EEPEVYPESEDMKMDAEEEDAGIS. Cysteine 120 and cysteine 136 are joined by a disulfide.

The protein belongs to the natriuretic peptide family. As to expression, heart ventricle, and to a lower extent in heart atrium.

The protein localises to the secreted. Functionally, exhibits natriuretic and vasodepressor activity. This Anguilla japonica (Japanese eel) protein is Ventricular natriuretic peptide (vnp).